A 382-amino-acid polypeptide reads, in one-letter code: Chaperone protein DnaJ (382 aa).

Positions 5 to 70 (DYYEVLGVSR…DKKAAYDRYG (66 aa)) constitute a J domain. Residues 141 to 219 (GVQKTINVPA…CHGAGRVEKE (79 aa)) form a CR-type zinc finger. Zn(2+) is bound by residues Cys-154, Cys-157, Cys-171, Cys-174, Cys-193, Cys-196, Cys-207, and Cys-210. CXXCXGXG motif repeat units follow at residues 154–161 (CDACKGTG), 171–178 (CPTCSGMG), 193–200 (CPTCNGMG), and 207–214 (CKVCHGAG).

This sequence belongs to the DnaJ family. As to quaternary structure, homodimer. Zn(2+) is required as a cofactor.

Its subcellular location is the cytoplasm. Functionally, participates actively in the response to hyperosmotic and heat shock by preventing the aggregation of stress-denatured proteins and by disaggregating proteins, also in an autonomous, DnaK-independent fashion. Unfolded proteins bind initially to DnaJ; upon interaction with the DnaJ-bound protein, DnaK hydrolyzes its bound ATP, resulting in the formation of a stable complex. GrpE releases ADP from DnaK; ATP binding to DnaK triggers the release of the substrate protein, thus completing the reaction cycle. Several rounds of ATP-dependent interactions between DnaJ, DnaK and GrpE are required for fully efficient folding. Also involved, together with DnaK and GrpE, in the DNA replication of plasmids through activation of initiation proteins. This Cereibacter sphaeroides (strain ATCC 17029 / ATH 2.4.9) (Rhodobacter sphaeroides) protein is Chaperone protein DnaJ.